The sequence spans 358 residues: Aminomethyltransferase (358 aa).

This sequence belongs to the GcvT family. The glycine cleavage system is composed of four proteins: P, T, L and H.

The catalysed reaction is N(6)-[(R)-S(8)-aminomethyldihydrolipoyl]-L-lysyl-[protein] + (6S)-5,6,7,8-tetrahydrofolate = N(6)-[(R)-dihydrolipoyl]-L-lysyl-[protein] + (6R)-5,10-methylene-5,6,7,8-tetrahydrofolate + NH4(+). Its function is as follows. The glycine cleavage system catalyzes the degradation of glycine. In Francisella tularensis subsp. tularensis (strain WY96-3418), this protein is Aminomethyltransferase.